The sequence spans 427 residues: Alpha/beta hydrolase gkaG (427 aa).

Residue D368 is part of the active site.

Belongs to the AB hydrolase superfamily. Homodimer.

It participates in mycotoxin biosynthesis. Alpha/beta hydrolase; part of the gene cluster that mediates the biosynthesis of GKK1032, fungal natural products containing a macrocyclic para-cyclophane connected to a decahydrofluorene ring system that show potent antitumor activities. Within the pathway, gkaG catalyzes the Knoevenagel condensation that affords the 3-pyrrolin-2-one ring, using as substrate the polyketide-tyrosyl acyl thioester product of gkaA. The pathway begins with the PKS-NRPS gkaA which, with the help of the trans-enoyl reductase gkaC, synthesizes the polyketide-tyrosyl acyl thioester product which can be reductively off-loaded by the terminal reductase (R) domain in gkaA. The alpha/beta hydrolase gkaG is then required to catalyze the subsequent Knoevenagel condensation that affords the 3-pyrrolin-2-one ring, whereas the three proteins gkaB, gkaX and gkaZ then function synergistically to form the cyclophane. This is Alpha/beta hydrolase gkaG from Penicillium citrinum.